Consider the following 232-residue polypeptide: EEF1A lysine methyltransferase 3 (232 aa).

S-adenosyl-L-methionine contacts are provided by residues Trp57, Gly83 to Gly85, Asp104, Trp133, and Ala150.

Belongs to the methyltransferase superfamily. METTL21 family. Interacts with members of the heat shock protein 70 and 90 families and of the TCP-1 chaperonin family, as well as with HSPD1, STIP1 and tubulin; at least some of these proteins may be methylation substrates.

Its subcellular location is the cytoplasm. It localises to the cytoskeleton. The protein localises to the microtubule organizing center. It is found in the centrosome. The catalysed reaction is L-lysyl-[protein] + 3 S-adenosyl-L-methionine = N(6),N(6),N(6)-trimethyl-L-lysyl-[protein] + 3 S-adenosyl-L-homocysteine + 3 H(+). It catalyses the reaction L-lysyl-[protein] + S-adenosyl-L-methionine = N(6)-methyl-L-lysyl-[protein] + S-adenosyl-L-homocysteine + H(+). The enzyme catalyses N(6)-methyl-L-lysyl-[protein] + S-adenosyl-L-methionine = N(6),N(6)-dimethyl-L-lysyl-[protein] + S-adenosyl-L-homocysteine + H(+). It carries out the reaction N(6),N(6)-dimethyl-L-lysyl-[protein] + S-adenosyl-L-methionine = N(6),N(6),N(6)-trimethyl-L-lysyl-[protein] + S-adenosyl-L-homocysteine + H(+). Protein-lysine methyltransferase that selectively mono-, di- and trimethylates 'Lys-165' of the translation elongation factors EEF1A1 and EEF1A2 in an aminoacyl-tRNA and GTP-dependent manner. EEF1A1 methylation by EEF1AKMT3 is dynamic as well as inducible by stress conditions, such as ER-stress, and plays a regulatory role on mRNA translation. This is EEF1A lysine methyltransferase 3 from Mus musculus (Mouse).